The following is a 1076-amino-acid chain: Nucleoporin NUP1 (1076 aa).

Over residues 1–11 the composition is skewed to low complexity; it reads MSSNTSSVMSS. A disordered region spans residues 1–39; that stretch reads MSSNTSSVMSSPRVEKRSFSSTLKSFFTNPNKKRPSSKK. Residue S2 is modified to N-acetylserine. Polar residues predominate over residues 19–30; it reads FSSTLKSFFTNP. Phosphoserine is present on residues S54 and S161. 2 disordered regions span residues 143-183 and 224-260; these read SQSK…TNVG and KKDNKDKEGNAGGDQKTSENRNNIKSSISNGNLATGP. Composition is skewed to polar residues over residues 154-170 and 243-260; these read LCTSSTPSPIKNGSCTR and NRNNIKSSISNGNLATGP. Residues 336–338 form an FXF 1 repeat; that stretch reads FDF. Position 381 is a phosphothreonine (T381). S383 bears the Phosphoserine mark. The FXF 2 repeat unit spans residues 384-386; it reads FNF. The tract at residues 403–518 is disordered; sequence TTLFNFGGKS…SFVFGASDKQ (116 aa). FXFG repeat units follow at residues 406 to 409 and 422 to 425; these read FNFG and FKFG. Positions 426–439 are enriched in basic and acidic residues; that stretch reads KTSEKSENHTESDA. 2 FXFG repeats span residues 448–451 and 484–487; these read FSFG and FDFG. Over residues 488-505 the composition is skewed to basic and acidic residues; that stretch reads KTGDQKETKKGESEKDAS. FXFG repeat units lie at residues 510–513, 525–528, 543–546, and 571–574; these read FVFG and FTFG. Residues 548 to 743 are disordered; sequence AATAKETHTK…SMKSTASTAA (196 aa). FXF repeat units lie at residues 591–593, 614–616, 636–638, and 657–659; these read FSF and FTF. Polar residues-rich tracts occupy residues 634–649 and 658–667; these read PTFSFTEPAQKDSSVV and TFASSKTSQP. Residue S637 is modified to Phosphoserine. An FXFG 9 repeat occupies 671-674; that stretch reads FSFG. An FXF 7 repeat occupies 689 to 691; sequence FSF. FXFG repeat units lie at residues 708 to 711 and 727 to 730; these read FTFG and FSFG. The segment covering 708-723 has biased composition (low complexity); the sequence is FTFGGSTTNNTTTTST. An FXF 8 repeat occupies 753–755; the sequence is FSF. The FXFG 12 repeat unit spans residues 800–803; sequence FSFG. 2 FXF repeats span residues 819 to 821 and 866 to 868; these read FSF and FGF. One copy of the FXFG 13 repeat lies at 885 to 888; it reads FNFG. The FXF 11 repeat unit spans residues 929–931; that stretch reads FNF. A disordered region spans residues 940–979; the sequence is GGSVFNMNGNTNANTVFAGSNNQPHQSQTPSFNTNSSFTP. Positions 944 to 964 are enriched in polar residues; the sequence is FNMNGNTNANTVFAGSNNQPH. A compositionally biased stretch (low complexity) spans 965-979; the sequence is QSQTPSFNTNSSFTP. 3 FG repeats span residues 1008 to 1009, 1027 to 1028, and 1038 to 1039; these read FG. A disordered region spans residues 1025–1054; that stretch reads SIFGGAGGVPTTSFGQPQSAPNQMGMGTNN. Polar residues predominate over residues 1034–1045; sequence PTTSFGQPQSAP. The interaction with KAP95 stretch occupies residues 1040 to 1076; that stretch reads QPQSAPNQMGMGTNNGMSMGGGVMANRKIARMRHSKR.

Component of the nuclear pore complex (NPC). NPC constitutes the exclusive means of nucleocytoplasmic transport. NPCs allow the passive diffusion of ions and small molecules and the active, nuclear transport receptor-mediated bidirectional transport of macromolecules such as proteins, RNAs, ribonucleoparticles (RNPs), and ribosomal subunits across the nuclear envelope. Due to its 8-fold rotational symmetry, all subunits are present with 8 copies or multiples thereof. Interacts through its FG repeats with nuclear transport receptors. Binds to the nuclear basket of the NPC through NUP60. Interacts with KAP122. Phosphorylated by CDC28.

Its subcellular location is the nucleus. It localises to the nuclear pore complex. The protein resides in the nucleus membrane. Its function is as follows. Functions as a component of the nuclear pore complex (NPC). NPC components, collectively referred to as nucleoporins (NUPs), can play the role of both NPC structural components and of docking or interaction partners for transiently associated nuclear transport factors. Active directional transport is assured by both, a Phe-Gly (FG) repeat affinity gradient for these transport factors across the NPC and a transport cofactor concentration gradient across the nuclear envelope (GSP1 and GSP2 GTPases associated predominantly with GTP in the nucleus, with GDP in the cytoplasm). As one of the FG repeat nucleoporins NUP1 is involved in interactions with and guidance of nuclear transport receptors such as SRP1-KAP95 (importin alpha and beta) through the NPC. Like the closely related NUP2 it also plays an important role in disassembling and recycling SRP1-KAP95 to the cytoplasm after nuclear import. Upon entry of the heterotrimeric SRP1-KAP95-cargo complex in the nucleus, NUP1 binds through its C-terminus to KAP95, thus accelerating the release of KAP95 and, indirectly, of the nuclear localization signal (NLS)-containing cargo from the SRP1-KAP95-cargo complex. The protein is Nucleoporin NUP1 (NUP1) of Saccharomyces cerevisiae (strain ATCC 204508 / S288c) (Baker's yeast).